The following is a 257-amino-acid chain: tRNA uridine(34) hydroxylase (257 aa).

The Rhodanese domain occupies 128-222 (NGRRLVMLDA…YFEQVGGEGY (95 aa)). C182 acts as the Cysteine persulfide intermediate in catalysis.

This sequence belongs to the TrhO family.

It catalyses the reaction uridine(34) in tRNA + AH2 + O2 = 5-hydroxyuridine(34) in tRNA + A + H2O. Functionally, catalyzes oxygen-dependent 5-hydroxyuridine (ho5U) modification at position 34 in tRNAs. The sequence is that of tRNA uridine(34) hydroxylase from Xylella fastidiosa (strain 9a5c).